Reading from the N-terminus, the 683-residue chain is MEHVRVIFFFFACVLKIVPFICLAQKDKYEFPPGFNCVASGGNFTANSSFAGNLNGLVSSLSSLTSKPYGFYNLSSGDSSGERAYAIGLCRREVKRDDCLSCIQIAARNLIEQCPLTNQAVVWYTHCMFRYSNMIIYGRKETTPTLSFQAGKNISANRDEFDRLQIELLDRLKGIAAAGGPNRKYAQGSGSGVAGYPQFYGSAHCTPDLSEQDCNDCLVFGFEKIPGCCAGQVGLRWFFPSCSYRFETWRFYEFDADLEPDPPAIQPADSPTSAARTERTGKGKGGSKVIVAIVIPIVFVALFAICLCLLLKWKKNKSVGRVKGNKHNLLLLVIVILLQKDEFSDSLVVDFETLKAATDNFSPENELGRGGFGSVYKGVFSGGQEIAVKRLSCTSGQGDSEFKNEILLLAKLQHRNLVRLLGFCIEGQERILVYEFIKNASLDNFIFDLKKRQLLDWGVRYKMIGGVARGLLYLHEDSRYRIIHRDLKASNILLDQEMNPKIADFGLAKLYDTDQTSTHRFTSKIAGTYGYMAPEYAIYGQFSVKTDVFSFGVLVIEIITGKGNNNGRSNDDEEAENLLSWVWRCWREDIILSVIDPSLTTGSRSEILRCIHIGLLCVQESPASRPTMDSVALMLNSYSYTLPTPSRPAFALESVMPSMNVSSSTEPLLMSLNDVTVSELSPR.

Residues 1–24 form the signal peptide; that stretch reads MEHVRVIFFFFACVLKIVPFICLA. The Extracellular portion of the chain corresponds to 25 to 288; sequence QKDKYEFPPG…RTGKGKGGSK (264 aa). 2 Gnk2-homologous domains span residues 32–136 and 142–251; these read PPGF…NMII and TTPT…TWRF. N-linked (GlcNAc...) asparagine glycosylation is found at Asn43, Asn47, Asn73, and Asn153. A disordered region spans residues 263-283; the sequence is PAIQPADSPTSAARTERTGKG. A helical transmembrane segment spans residues 289–309; it reads VIVAIVIPIVFVALFAICLCL. Residues 310–683 are Cytoplasmic-facing; it reads LLKWKKNKSV…DVTVSELSPR (374 aa). Residues 361–641 form the Protein kinase domain; the sequence is FSPENELGRG…ALMLNSYSYT (281 aa). Residues 367-375 and Lys389 each bind ATP; that span reads LGRGGFGSV. Position 434 is a phosphotyrosine (Tyr434). Asp486 serves as the catalytic Proton acceptor. A Phosphoserine modification is found at Ser490. Thr528 is subject to Phosphothreonine. Position 536 is a phosphotyrosine (Tyr536).

This sequence belongs to the protein kinase superfamily. Ser/Thr protein kinase family. CRK subfamily.

It localises to the membrane. The enzyme catalyses L-seryl-[protein] + ATP = O-phospho-L-seryl-[protein] + ADP + H(+). It carries out the reaction L-threonyl-[protein] + ATP = O-phospho-L-threonyl-[protein] + ADP + H(+). This Arabidopsis thaliana (Mouse-ear cress) protein is Cysteine-rich receptor-like protein kinase 28 (CRK28).